A 181-amino-acid chain; its full sequence is RNA pyrophosphohydrolase (181 aa).

Residues 6–148 (GFRPNVGIIV…KRQVYRQALQ (143 aa)) form the Nudix hydrolase domain. The short motif at 38 to 59 (GGVEANETPLEALYRELREEVG) is the Nudix box element.

Belongs to the Nudix hydrolase family. RppH subfamily. A divalent metal cation serves as cofactor.

Accelerates the degradation of transcripts by removing pyrophosphate from the 5'-end of triphosphorylated RNA, leading to a more labile monophosphorylated state that can stimulate subsequent ribonuclease cleavage. The protein is RNA pyrophosphohydrolase of Halorhodospira halophila (strain DSM 244 / SL1) (Ectothiorhodospira halophila (strain DSM 244 / SL1)).